The chain runs to 575 residues: Alpha-(1,6)-fucosyltransferase (575 aa).

Over 1–9 the chain is Cytoplasmic; the sequence is MRAWTGSWR. A helical; Signal-anchor for type II membrane protein membrane pass occupies residues 10–30; the sequence is WIMLILFAWGTLLFYIGGHLV. At 31-575 the chain is on the lumenal side; the sequence is RDNDHPDHSS…KYPTYPEAEK (545 aa). Cystine bridges form between C204/C266, C212/C230, and C218/C222. The GT23 domain occupies 206–493; it reads KARKLVCNIN…PDASANFHSL (288 aa). At S278 the chain carries Phosphoserine. The short motif at 299–305 is the SH3-binding element; it reads PRPPYLP. The tract at residues 365 to 366 is important for donor substrate binding; that stretch reads RR. C465 and C472 are joined by a disulfide. Residues 502-563 enclose the SH3 domain; that stretch reads QNAHNQIAVY…PSYKVREKIE (62 aa).

It belongs to the glycosyltransferase 23 family. Tyrosine phosphorylated by PKDCC/VLK.

The protein resides in the golgi apparatus. It localises to the golgi stack membrane. The enzyme catalyses N(4)-{beta-D-GlcNAc-(1-&gt;2)-alpha-D-Man-(1-&gt;3)-[beta-D-GlcNAc-(1-&gt;2)-alpha-D-Man-(1-&gt;6)]-beta-D-Man-(1-&gt;4)-beta-D-GlcNAc-(1-&gt;4)-beta-D-GlcNAc}-L-asparaginyl-[protein] + GDP-beta-L-fucose = an N(4)-{beta-D-GlcNAc-(1-&gt;2)-alpha-D-Man-(1-&gt;3)-[beta-D-GlcNAc-(1-&gt;2)-alpha-D-Man-(1-&gt;6)]-beta-D-Man-(1-&gt;4)-beta-D-GlcNAc-(1-&gt;4)-[alpha-L-Fuc-(1-&gt;6)]-beta-D-GlcNAc}-L-asparaginyl-[protein] + GDP + H(+). The protein operates within protein modification; protein glycosylation. Catalyzes the addition of fucose in alpha 1-6 linkage to the first GlcNAc residue, next to the peptide chains in N-glycans. In Mus musculus (Mouse), this protein is Alpha-(1,6)-fucosyltransferase (Fut8).